Consider the following 437-residue polypeptide: Epsilon-sarcoglycan (437 aa).

Residues methionine 1–phenylalanine 317 lie on the Extracellular side of the membrane. Asparagine 200 is a glycosylation site (N-linked (GlcNAc...) asparagine). A helical transmembrane segment spans residues leucine 318 to isoleucine 338. The Cytoplasmic segment spans residues methionine 339–proline 437.

The protein belongs to the sarcoglycan alpha/epsilon family. Post-translationally, N-glycosylated. In terms of processing, ubiquitinated, leading to its degradation by the proteasome. In terms of tissue distribution, ubiquitous.

The protein resides in the cell membrane. Its subcellular location is the sarcolemma. It localises to the cytoplasm. It is found in the cytoskeleton. The protein localises to the cell projection. The protein resides in the dendrite. Its subcellular location is the golgi apparatus. Its function is as follows. Component of the sarcoglycan complex, a subcomplex of the dystrophin-glycoprotein complex which forms a link between the F-actin cytoskeleton and the extracellular matrix. In Homo sapiens (Human), this protein is Epsilon-sarcoglycan (SGCE).